Reading from the N-terminus, the 128-residue chain is MLTYALVALGSAIGGTLRYWLSMVIAEASAGTFPWATLVINVAGSAAIGLFATLTSVDGRVFVPSEWRTFFMVGICGGFTTFSSFSLQTLALAQDGDWLAAGLNVVGSVALCLLAVWLGHVAATIINR.

A run of 4 helical transmembrane segments spans residues Ala5 to Ile25, Thr32 to Ala52, Phe70 to Leu90, and Val106 to Ile126. Na(+)-binding residues include Gly77 and Thr80.

It belongs to the fluoride channel Fluc/FEX (TC 1.A.43) family.

The protein localises to the cell inner membrane. It carries out the reaction fluoride(in) = fluoride(out). Its activity is regulated as follows. Na(+) is not transported, but it plays an essential structural role and its presence is essential for fluoride channel function. Fluoride-specific ion channel. Important for reducing fluoride concentration in the cell, thus reducing its toxicity. The protein is Fluoride-specific ion channel FluC of Paramagnetospirillum magneticum (strain ATCC 700264 / AMB-1) (Magnetospirillum magneticum).